Consider the following 101-residue polypeptide: NAD(P)H-quinone oxidoreductase subunit 4L, chloroplastic (101 aa).

The next 3 helical transmembrane spans lie at Met2–Ile22, Met32–Phe52, and Ile61–Val81.

This sequence belongs to the complex I subunit 4L family. In terms of assembly, NDH is composed of at least 16 different subunits, 5 of which are encoded in the nucleus.

The protein localises to the plastid. The protein resides in the chloroplast thylakoid membrane. It carries out the reaction a plastoquinone + NADH + (n+1) H(+)(in) = a plastoquinol + NAD(+) + n H(+)(out). The catalysed reaction is a plastoquinone + NADPH + (n+1) H(+)(in) = a plastoquinol + NADP(+) + n H(+)(out). Its function is as follows. NDH shuttles electrons from NAD(P)H:plastoquinone, via FMN and iron-sulfur (Fe-S) centers, to quinones in the photosynthetic chain and possibly in a chloroplast respiratory chain. The immediate electron acceptor for the enzyme in this species is believed to be plastoquinone. Couples the redox reaction to proton translocation, and thus conserves the redox energy in a proton gradient. The polypeptide is NAD(P)H-quinone oxidoreductase subunit 4L, chloroplastic (Buxus microphylla (Littleleaf boxwood)).